Consider the following 306-residue polypeptide: Glutaminase (306 aa).

Substrate is bound by residues Ser64, Asn115, Glu159, Asn166, Tyr190, Tyr242, and Val260.

It belongs to the glutaminase family. As to quaternary structure, homotetramer.

The enzyme catalyses L-glutamine + H2O = L-glutamate + NH4(+). This is Glutaminase from Aeromonas salmonicida (strain A449).